Here is a 240-residue protein sequence, read N- to C-terminus: MTLQWTAVATFLYAEIGLILIFCLPFIPPQRWQKIFSFSVWGKIASFWNKAFLTIIILLIVLFLDAVREVRKYSSTHTIEKSSASRPAAYEHTQMKLFRSQRNLYISGFSLFFWLVLRRLVTLITQLAKELSHKGVLKHQAENINQAAKKFMEENERLKRLLKNYGKEEEHILEAENKKLEEDKEKLKTELKKASDALSKAQNDVMIMKMQSERLSKEYDRLLREHSELQDRAGKDKKCL.

Over 1-6 (MTLQWT) the chain is Lumenal. Residues 7–27 (AVATFLYAEIGLILIFCLPFI) form a helical membrane-spanning segment. Residues 28-43 (PPQRWQKIFSFSVWGK) are Cytoplasmic-facing. The chain crosses the membrane as a helical span at residues 44 to 64 (IASFWNKAFLTIIILLIVLFL). Over 65–103 (DAVREVRKYSSTHTIEKSSASRPAAYEHTQMKLFRSQRN) the chain is Lumenal. Residues 104–124 (LYISGFSLFFWLVLRRLVTLI) traverse the membrane as a helical segment. Residues 125–240 (TQLAKELSHK…DRAGKDKKCL (116 aa)) lie on the Cytoplasmic side of the membrane. Residues 166–233 (GKEEEHILEA…REHSELQDRA (68 aa)) adopt a coiled-coil conformation. A Di-lysine motif motif is present at residues 237-240 (KKCL).

Belongs to the BCAP29/BCAP31 family. Homodimer and heterodimer with BCAP31. Binds CASP8 as a complex containing BCAP31, BCAP29, BCL2 and/or BCL2L1. Interacts with VAMP3, VAMP1 and membrane IgD immunoglobulins. May interact with ACTG1 and non-muscle myosin II.

The protein localises to the endoplasmic reticulum membrane. Its function is as follows. May play a role in anterograde transport of membrane proteins from the endoplasmic reticulum to the Golgi. May be involved in CASP8-mediated apoptosis. This is B-cell receptor-associated protein 29 (BCAP29) from Bos taurus (Bovine).